A 455-amino-acid chain; its full sequence is Single-stranded DNA-binding protein homolog sam-10 (455 aa).

In terms of domain architecture, LisH spans 19 to 51 (ARDRLTSYIYEYLQQTGASKTAETFKEEVLSTN). Disordered regions lie at residues 217 to 249 (PPPG…LNSP), 281 to 302 (SDHQ…TAGG), 314 to 343 (GPGS…HQPK), and 357 to 442 (EALT…NGEI). 2 stretches are compositionally biased toward low complexity: residues 288–298 (AGPAAAAPGAT) and 321–336 (VATT…SSIG). Polar residues predominate over residues 396 to 406 (HSVNNNVNPGT). Low complexity predominate over residues 407–421 (PGSNPLSNPMSNPPL).

As to expression, ubiquitously expressed with higher expression in the head and tail ganglia, the vulva and PLM neurons.

It localises to the cytoplasm. Its subcellular location is the nucleus. Its function is as follows. Involved cell autonomously in PLM neuron pre-synaptic differentiation by negatively regulating prk-2 expression and in neurite branch positioning. The chain is Single-stranded DNA-binding protein homolog sam-10 from Caenorhabditis elegans.